The sequence spans 190 residues: Elongation factor P 2 (190 aa).

Belongs to the elongation factor P family.

It localises to the cytoplasm. It participates in protein biosynthesis; polypeptide chain elongation. Involved in peptide bond synthesis. Stimulates efficient translation and peptide-bond synthesis on native or reconstituted 70S ribosomes in vitro. Probably functions indirectly by altering the affinity of the ribosome for aminoacyl-tRNA, thus increasing their reactivity as acceptors for peptidyl transferase. This is Elongation factor P 2 (efp2) from Protochlamydia amoebophila (strain UWE25).